The primary structure comprises 528 residues: Chromosomal replication initiator protein DnaA (528 aa).

The domain I, interacts with DnaA modulators stretch occupies residues 1-104 (MNDDPNALAR…PVDDEPESDP (104 aa)). Residues 95–158 (PVDDEPESDP…TDFEEVDDDR (64 aa)) are disordered. Over residues 104 to 123 (PPSRDHRPEPEPLHTPRHLE) the composition is skewed to basic and acidic residues. Positions 105–187 (PSRDHRPEPE…GPAPSATGGN (83 aa)) are domain II. Residues 149 to 158 (TDFEEVDDDR) show a composition bias toward acidic residues. The tract at residues 188–404 (SLNAKYTFDT…GALIRVTAFA (217 aa)) is domain III, AAA+ region. The ATP site is built by Gly232, Gly234, Lys235, and Thr236. The interval 405-528 (SLNRQPLDLT…TARIKQRSKR (124 aa)) is domain IV, binds dsDNA.

This sequence belongs to the DnaA family. In terms of assembly, oligomerizes as a right-handed, spiral filament on DNA at oriC.

It is found in the cytoplasm. In terms of biological role, plays an essential role in the initiation and regulation of chromosomal replication. ATP-DnaA binds to the origin of replication (oriC) to initiate formation of the DNA replication initiation complex once per cell cycle. Binds the DnaA box (a 9 base pair repeat at the origin) and separates the double-stranded (ds)DNA. Forms a right-handed helical filament on oriC DNA; dsDNA binds to the exterior of the filament while single-stranded (ss)DNA is stabiized in the filament's interior. The ATP-DnaA-oriC complex binds and stabilizes one strand of the AT-rich DNA unwinding element (DUE), permitting loading of DNA polymerase. After initiation quickly degrades to an ADP-DnaA complex that is not apt for DNA replication. Binds acidic phospholipids. The protein is Chromosomal replication initiator protein DnaA of Rhodococcus jostii (strain RHA1).